A 253-amino-acid chain; its full sequence is uncharacterized protein (253 aa).

This is an uncharacterized protein from Escherichia coli O6:H1 (strain CFT073 / ATCC 700928 / UPEC).